Reading from the N-terminus, the 288-residue chain is Ribosomal RNA small subunit methyltransferase I (288 aa).

The protein belongs to the methyltransferase superfamily. RsmI family.

Its subcellular location is the cytoplasm. It catalyses the reaction cytidine(1402) in 16S rRNA + S-adenosyl-L-methionine = 2'-O-methylcytidine(1402) in 16S rRNA + S-adenosyl-L-homocysteine + H(+). Its function is as follows. Catalyzes the 2'-O-methylation of the ribose of cytidine 1402 (C1402) in 16S rRNA. The sequence is that of Ribosomal RNA small subunit methyltransferase I from Vibrio cholerae serotype O1 (strain ATCC 39315 / El Tor Inaba N16961).